A 240-amino-acid chain; its full sequence is Vacuolar-sorting protein SNF7 (240 aa).

Phosphothreonine is present on threonine 72. Phosphoserine is present on residues serine 119 and serine 193. The interval 193 to 240 (SENKVSLPSVPSNKIKQSENSVKDGEEEEDEEDEDEKALRELQAEMGL) is disordered. Positions 195–212 (NKVSLPSVPSNKIKQSEN) are enriched in polar residues. The span at 217–228 (GEEEEDEEDEDE) shows a compositional bias: acidic residues. Lysine 229 is covalently cross-linked (Glycyl lysine isopeptide (Lys-Gly) (interchain with G-Cter in ubiquitin)). Residues 229 to 240 (KALRELQAEMGL) are compositionally biased toward basic and acidic residues.

Belongs to the SNF7 family. As to quaternary structure, core component of the ESCRT-III complex (endosomal sorting required for transport complex III). ESCRT-III appears to be sequentially assembled as a flat lattice on the endosome membrane and forms a transient 450 kDa complex that contains DID4, oligomerized SNF7, VPS20 and VPS24. SNF7 polymerizes into spirals at the surface of lipid bilayers. SNF7 polymerization is nucleated by association of SNF7 with VPS20; the process is terminated through association of VPS24, possibly by capping the SNF7 filament. Interacts with VTA1; the interaction requires DID2. Interacts with BRO1. Interacts with DOA4. Interacts with HEH1 and HEH2. Interacts with RIM20 and YGR122W.

The protein resides in the cytoplasm. It localises to the endosome membrane. It is found in the nucleus envelope. Functionally, acts a component of the ESCRT-III complex required for the sorting and concentration of proteins resulting in the entry of these proteins into the invaginating vesicles of the multivesicular body (MVB). The sequential action of ESCRT-0, -I, and -II together with the ordered assembly of ESCRT-III links membrane invagination to cargo sorting. Membrane scission in the neck of the growing vesicle releases mature, cargo-laden ILVs into the lumen. ESCRT-III is critical for late steps in MVB sorting, such as membrane invagination and final cargo sorting and recruitment of late-acting components of the sorting machinery. SNF7 is the most abundant ESCRT-III subunit which forms membrane-sculpting filaments with 30 Angstrom periodicity and a exposed cationic membrane-binding surface. Its activation requires a prominent conformational rearrangement to expose protein-membrane and protein-protein interfaces. SNF7 filaments then form spirals that could function as spiral springs. The elastic expansion of compressed SNF7 spirals generates an area difference between the two sides of the membrane and thus curvature which could be the origin of membrane deformation leading eventually to fission. SNF7 recruits BRO1, which in turn recruits DOA4, which deubiquitinates cargos before their enclosure within MVB vesicles. ESCRT-III is also recruited to the nuclear envelope (NE) by integral INM proteins to surveil and clear defective nuclear pore complex (NPC) assembly intermediates to ensure the fidelity of NPC assembly. The polypeptide is Vacuolar-sorting protein SNF7 (Saccharomyces cerevisiae (strain ATCC 204508 / S288c) (Baker's yeast)).